The following is a 130-amino-acid chain: Small ribosomal subunit protein uS8 (130 aa).

The protein belongs to the universal ribosomal protein uS8 family. As to quaternary structure, part of the 30S ribosomal subunit.

One of the primary rRNA binding proteins, it binds directly to 16S rRNA central domain where it helps coordinate assembly of the platform of the 30S subunit. In Thermococcus sibiricus (strain DSM 12597 / MM 739), this protein is Small ribosomal subunit protein uS8.